The primary structure comprises 88 residues: Small ribosomal subunit protein uS17 (88 aa).

It belongs to the universal ribosomal protein uS17 family. Part of the 30S ribosomal subunit.

Functionally, one of the primary rRNA binding proteins, it binds specifically to the 5'-end of 16S ribosomal RNA. The chain is Small ribosomal subunit protein uS17 from Vesicomyosocius okutanii subsp. Calyptogena okutanii (strain HA).